The following is a 67-amino-acid chain: Cold shock protein (67 aa).

Residues 4-64 (GTVKWFNAEK…GAKGPQATGV (61 aa)) enclose the CSD domain.

The protein localises to the cytoplasm. The protein is Cold shock protein (csp) of Arthrobacter globiformis.